Reading from the N-terminus, the 466-residue chain is Hydroxyproline dehydrogenase (466 aa).

The protein belongs to the proline oxidase family. FAD serves as cofactor.

The enzyme catalyses trans-4-hydroxy-L-proline + a quinone = (3R,5S)-1-pyrroline-3-hydroxy-5-carboxylate + a quinol + H(+). It carries out the reaction L-proline + a quinone = (S)-1-pyrroline-5-carboxylate + a quinol + H(+). It participates in amino-acid degradation; L-proline degradation into L-glutamate; L-glutamate from L-proline: step 1/2. Functionally, dehydrogenase that converts trans-4-L-hydroxyproline to delta-1-pyrroline-3-hydroxy-5-carboxylate (Hyp) using a quinone as the terminal electron acceptor. Can also use proline as a substrate but with a very much lower efficiency. Does not react with other diastereomers of Hyp: trans-4-D-hydroxyproline and cis-4-L-hydroxyproline. This Xenopus laevis (African clawed frog) protein is Hydroxyproline dehydrogenase (prodh2).